An 848-amino-acid chain; its full sequence is Leucine--tRNA ligase (848 aa).

The short motif at 41-51 (PYPSGRIHMGH) is the 'HIGH' region element. The 'KMSKS' region signature appears at 619 to 623 (KMSKS). K622 is a binding site for ATP.

The protein belongs to the class-I aminoacyl-tRNA synthetase family.

It localises to the cytoplasm. The catalysed reaction is tRNA(Leu) + L-leucine + ATP = L-leucyl-tRNA(Leu) + AMP + diphosphate. This Roseobacter denitrificans (strain ATCC 33942 / OCh 114) (Erythrobacter sp. (strain OCh 114)) protein is Leucine--tRNA ligase.